The following is an 857-amino-acid chain: Phosphoenolpyruvate carboxylase (857 aa).

Residues His-144 and Lys-530 contribute to the active site.

The protein belongs to the PEPCase type 1 family. In terms of assembly, homotetramer. It depends on Mg(2+) as a cofactor. In terms of processing, the N-terminus is blocked.

It catalyses the reaction oxaloacetate + phosphate = phosphoenolpyruvate + hydrogencarbonate. Functionally, forms oxaloacetate, a four-carbon dicarboxylic acid source for the tricarboxylic acid cycle. The protein is Phosphoenolpyruvate carboxylase (ppc) of Thermus sp. (strain 71).